A 666-amino-acid chain; its full sequence is DNA ligase (666 aa).

NAD(+) is bound by residues 31-35 (DKEFD), 80-81 (SL), and glutamate 110. The N6-AMP-lysine intermediate role is filled by lysine 112. Arginine 133, glutamate 170, lysine 285, and lysine 309 together coordinate NAD(+). Zn(2+) contacts are provided by cysteine 404, cysteine 407, cysteine 422, and cysteine 428. The region spanning 588–666 (GYTDKLAGQS…SEDEFLKLIS (79 aa)) is the BRCT domain.

It belongs to the NAD-dependent DNA ligase family. LigA subfamily. Requires Mg(2+) as cofactor. The cofactor is Mn(2+).

It carries out the reaction NAD(+) + (deoxyribonucleotide)n-3'-hydroxyl + 5'-phospho-(deoxyribonucleotide)m = (deoxyribonucleotide)n+m + AMP + beta-nicotinamide D-nucleotide.. Functionally, DNA ligase that catalyzes the formation of phosphodiester linkages between 5'-phosphoryl and 3'-hydroxyl groups in double-stranded DNA using NAD as a coenzyme and as the energy source for the reaction. It is essential for DNA replication and repair of damaged DNA. This is DNA ligase from Bacteroides thetaiotaomicron (strain ATCC 29148 / DSM 2079 / JCM 5827 / CCUG 10774 / NCTC 10582 / VPI-5482 / E50).